Reading from the N-terminus, the 184-residue chain is UPF0398 protein BAA_1648 (184 aa).

Belongs to the UPF0398 family.

The protein is UPF0398 protein BAA_1648 of Bacillus anthracis (strain A0248).